Consider the following 67-residue polypeptide: DNA gyrase inhibitor YacG (67 aa).

Residues Cys-10, Cys-13, Cys-29, and Cys-33 each coordinate Zn(2+). Over residues 44–57 the composition is skewed to basic and acidic residues; that stretch reads EEKRIPSSGDRSDT. Positions 44–67 are disordered; the sequence is EEKRIPSSGDRSDTDGWSEEENQP.

It belongs to the DNA gyrase inhibitor YacG family. In terms of assembly, interacts with GyrB. Zn(2+) serves as cofactor.

Inhibits all the catalytic activities of DNA gyrase by preventing its interaction with DNA. Acts by binding directly to the C-terminal domain of GyrB, which probably disrupts DNA binding by the gyrase. This is DNA gyrase inhibitor YacG from Cronobacter sakazakii (strain ATCC BAA-894) (Enterobacter sakazakii).